Here is a 773-residue protein sequence, read N- to C-terminus: Carnitine O-palmitoyltransferase 1, liver isoform (773 aa).

Alanine 2 carries the post-translational modification N-acetylalanine. At 2–47 (AEAHQAVAFQFTVTPDGIDLRLSHEALKQICLSGLHSWKKKFIRFK) the chain is on the cytoplasmic side. Residues 48 to 73 (NGIITGVFPANPSSWLIVVVGVISSM) traverse the membrane as a helical segment. Over 74–102 (HAKVDPSLGMIAKISRTLDTTGRMSSQTK) the chain is Mitochondrial intermembrane. The chain crosses the membrane as a helical span at residues 103 to 122 (NIVSGVLFGTGLWVAVIMTM). Residues 123–773 (RYSLKVLLSY…LFGLTINSKK (651 aa)) lie on the Cytoplasmic side of the membrane. 3'-nitrotyrosine is present on tyrosine 282. Residue histidine 473 is the Proton acceptor of the active site. Residue 555-567 (GKGLIKKCRTSPD) coordinates CoA. Threonine 588 is modified (phosphothreonine). Residue tyrosine 589 is modified to 3'-nitrotyrosine. (R)-carnitine is bound by residues tyrosine 589 and threonine 602. Threonine 604 carries the post-translational modification Phosphothreonine. A phosphoserine mark is found at serine 741 and serine 747.

It belongs to the carnitine/choline acetyltransferase family. Homohexamer and homotrimer. Identified in a complex that contains at least CPT1A, ACSL1 and VDAC1. Also identified in complexes with ACSL1 and VDAC2 and VDAC3. Interacts with ZDHHC4. In terms of tissue distribution, liver and kidney.

It is found in the mitochondrion outer membrane. The catalysed reaction is (R)-carnitine + hexadecanoyl-CoA = O-hexadecanoyl-(R)-carnitine + CoA. The enzyme catalyses succinyl-CoA + L-lysyl-[protein] = N(6)-succinyl-L-lysyl-[protein] + CoA + H(+). It functions in the pathway lipid metabolism; fatty acid beta-oxidation. Its activity is regulated as follows. Inhibited by malonyl-CoA. Its function is as follows. Catalyzes the transfer of the acyl group of long-chain fatty acid-CoA conjugates onto carnitine, an essential step for the mitochondrial uptake of long-chain fatty acids and their subsequent beta-oxidation in the mitochondrion. Also possesses a lysine succinyltransferase activity that can regulate enzymatic activity of substrate proteins such as ENO1 and metabolism independent of its classical carnitine O-palmitoyltransferase activity. Plays an important role in hepatic triglyceride metabolism. Also plays a role in inducible regulatory T-cell (iTreg) differentiation once activated by butyryl-CoA that antagonizes malonyl-CoA-mediated CPT1A repression. Sustains the IFN-I response by recruiting ZDHCC4 to palmitoylate MAVS at the mitochondria leading to MAVS stabilization and activation. This Rattus norvegicus (Rat) protein is Carnitine O-palmitoyltransferase 1, liver isoform (Cpt1a).